The sequence spans 746 residues: Hyperosmolality-gated Ca2+ permeable channel 2.1 (746 aa).

Helical transmembrane passes span 3 to 23 (ISAL…LLSL), 90 to 110 (MVIF…AFVL), 144 to 164 (LWVH…LLYF), 357 to 377 (IATL…VTFI), 405 to 425 (VITG…VPPL), 445 to 465 (ACIK…ILSG), 492 to 512 (AGFF…CEIM), 560 to 580 (VIAP…YLIY), 601 to 621 (IFHN…LGFF), and 623 to 643 (LKLS…TLLF). The segment covering 692-702 (LHSQKSSSKAE) has biased composition (polar residues). The interval 692–723 (LHSQKSSSKAECSNPFKKQELPDPEKLKPEEG) is disordered. The segment covering 708 to 723 (KKQELPDPEKLKPEEG) has biased composition (basic and acidic residues).

It belongs to the CSC1 (TC 1.A.17) family.

It is found in the membrane. Functionally, acts as an osmosensitive calcium-permeable cation channel. The polypeptide is Hyperosmolality-gated Ca2+ permeable channel 2.1 (Arabidopsis thaliana (Mouse-ear cress)).